Reading from the N-terminus, the 331-residue chain is MLKLIQNNREITALIAILCLFGLLSVIDHQYFSLQTVTLVFSSAQILILLAIGATLVMLTRNIDVSVGSIAGLCAVIMGMSLNAGFNLPVSCLLTLLLGMCAGFINGALVTWLKIPAIVTTLGTLGLYRGLMLLLTDGKWIEXLPDELKRLSAPLWLNISPIGWLLMILILAMAWILAKTTFGRNFYATGDNLQGARQLGVRTDSIQIIAFSVNGIMAALAGIVFASQIGFIPNQTGSGLEMRAIAACVLGGISLLGGTGTVIGAILGAFFLTQINSGLVLLKLPAWWNDFIAGFVLLAVLIFDGRLRCAIEKISANKNMPVSSKMTKVIR.

9 consecutive transmembrane segments (helical) span residues 14-34, 39-59, 70-90, 93-113, 115-135, 157-177, 206-226, 252-272, and 284-304; these read LIAILCLFGLLSVIDHQYFSL, LVFSSAQILILLAIGATLVML, IAGLCAVIMGMSLNAGFNLPV, LLTLLLGMCAGFINGALVTWL, IPAIVTTLGTLGLYRGLMLLL, LNISPIGWLLMILILAMAWIL, IQIIAFSVNGIMAALAGIVFA, GISLLGGTGTVIGAILGAFFL, and LPAWWNDFIAGFVLLAVLIFD.

The protein belongs to the binding-protein-dependent transport system permease family. AraH/RbsC subfamily. The complex is composed of two ATP-binding proteins (LsrA), two transmembrane proteins (LsrC and LsrD) and a solute-binding protein (LsrB).

The protein resides in the cell inner membrane. Its function is as follows. Part of the ABC transporter complex LsrABCD involved in autoinducer 2 (AI-2) import. Probably responsible for the translocation of the substrate across the membrane. The sequence is that of Autoinducer 2 import system permease protein LsrC (lsrC) from Photorhabdus luminescens (Xenorhabdus luminescens).